A 388-amino-acid chain; its full sequence is Large ribosomal subunit protein uL3A (388 aa).

A compositionally biased stretch (basic and acidic residues) spans Met-1–Arg-10. A disordered region spans residues Met-1 to Lys-34. Ser-13 is modified (phosphoserine). The segment covering Pro-18–Ala-31 has biased composition (basic residues). Ser-65, Ser-140, Ser-143, Ser-207, Ser-295, and Ser-355 each carry phosphoserine. The residue at position 372 (Thr-372) is a Phosphothreonine.

This sequence belongs to the universal ribosomal protein uL3 family. Component of the large ribosomal subunit (LSU). Mature yeast ribosomes consist of a small (40S) and a large (60S) subunit. The 40S small subunit contains 1 molecule of ribosomal RNA (18S rRNA) and at least 33 different proteins. The large 60S subunit contains 3 rRNA molecules (25S, 5.8S and 5S rRNA) and at least 46 different proteins. uL3 forms together with ES39L one of the contact sites for the signal recognition particle that targets ribosomes to the endoplasmic reticulum membrane.

It is found in the cytoplasm. Component of the ribosome, a large ribonucleoprotein complex responsible for the synthesis of proteins in the cell. The small ribosomal subunit (SSU) binds messenger RNAs (mRNAs) and translates the encoded message by selecting cognate aminoacyl-transfer RNA (tRNA) molecules. The large subunit (LSU) contains the ribosomal catalytic site termed the peptidyl transferase center (PTC), which catalyzes the formation of peptide bonds, thereby polymerizing the amino acids delivered by tRNAs into a polypeptide chain. The nascent polypeptides leave the ribosome through a tunnel in the LSU and interact with protein factors that function in enzymatic processing, targeting, and the membrane insertion of nascent chains at the exit of the ribosomal tunnel. uL3 plays a role in coordinating processes of accommodating the aminoacyl-tRNA in the PTC. The polypeptide is Large ribosomal subunit protein uL3A (rpl301) (Schizosaccharomyces pombe (strain 972 / ATCC 24843) (Fission yeast)).